The chain runs to 197 residues: Holliday junction branch migration complex subunit RuvA (197 aa).

The domain I stretch occupies residues 1 to 64; it reads MIGRLRGIVA…EDSVSLYGFL (64 aa). Residues 65–143 are domain II; that stretch reads REGERRLFRD…QFGAGGALPT (79 aa). Residues 144–153 are flexible linker; sequence GSGPAPADPL. The domain III stretch occupies residues 153-197; it reads LSDATVALQQLGYKPAEAARMARDAFNEGDEVATVIRKALQSALR.

This sequence belongs to the RuvA family. Homotetramer. Forms an RuvA(8)-RuvB(12)-Holliday junction (HJ) complex. HJ DNA is sandwiched between 2 RuvA tetramers; dsDNA enters through RuvA and exits via RuvB. An RuvB hexamer assembles on each DNA strand where it exits the tetramer. Each RuvB hexamer is contacted by two RuvA subunits (via domain III) on 2 adjacent RuvB subunits; this complex drives branch migration. In the full resolvosome a probable DNA-RuvA(4)-RuvB(12)-RuvC(2) complex forms which resolves the HJ.

The protein resides in the cytoplasm. The RuvA-RuvB-RuvC complex processes Holliday junction (HJ) DNA during genetic recombination and DNA repair, while the RuvA-RuvB complex plays an important role in the rescue of blocked DNA replication forks via replication fork reversal (RFR). RuvA specifically binds to HJ cruciform DNA, conferring on it an open structure. The RuvB hexamer acts as an ATP-dependent pump, pulling dsDNA into and through the RuvAB complex. HJ branch migration allows RuvC to scan DNA until it finds its consensus sequence, where it cleaves and resolves the cruciform DNA. The polypeptide is Holliday junction branch migration complex subunit RuvA (Stenotrophomonas maltophilia (strain K279a)).